The chain runs to 83 residues: Small ribosomal subunit protein bS16 (83 aa).

The protein belongs to the bacterial ribosomal protein bS16 family.

The polypeptide is Small ribosomal subunit protein bS16 (Cupriavidus taiwanensis (strain DSM 17343 / BCRC 17206 / CCUG 44338 / CIP 107171 / LMG 19424 / R1) (Ralstonia taiwanensis (strain LMG 19424))).